The chain runs to 770 residues: Molybdenum cofactor sulfurase (770 aa).

An N6-(pyridoxal phosphate)lysine modification is found at Lys-243. The active site involves Cys-405. Positions 611–769 (GDEVANWLCQ…LACGDPITVL (159 aa)) constitute an MOSC domain. Phosphoserine is present on Ser-726.

It belongs to the class-V pyridoxal-phosphate-dependent aminotransferase family. MOCOS subfamily. It depends on pyridoxal 5'-phosphate as a cofactor.

It catalyses the reaction Mo-molybdopterin + L-cysteine + AH2 = thio-Mo-molybdopterin + L-alanine + A + H2O. Its pathway is cofactor biosynthesis; molybdopterin biosynthesis. Its function is as follows. Sulfurates the molybdenum cofactor. Sulfation of molybdenum is essential for xanthine dehydrogenase (XDH) and aldehyde oxidase (ADO) enzymes in which molybdenum cofactor is liganded by 1 oxygen and 1 sulfur atom in active form. The chain is Molybdenum cofactor sulfurase from Drosophila grimshawi (Hawaiian fruit fly).